The chain runs to 602 residues: Elongation factor 4 (602 aa).

A tr-type G domain is found at 2 to 184; the sequence is NHIRNFSIIA…QIVAKVPAPR (183 aa). Residues 14–19 and 131–134 contribute to the GTP site; these read DHGKST and NKMD.

It belongs to the TRAFAC class translation factor GTPase superfamily. Classic translation factor GTPase family. LepA subfamily.

It localises to the cell inner membrane. It catalyses the reaction GTP + H2O = GDP + phosphate + H(+). Functionally, required for accurate and efficient protein synthesis under certain stress conditions. May act as a fidelity factor of the translation reaction, by catalyzing a one-codon backward translocation of tRNAs on improperly translocated ribosomes. Back-translocation proceeds from a post-translocation (POST) complex to a pre-translocation (PRE) complex, thus giving elongation factor G a second chance to translocate the tRNAs correctly. Binds to ribosomes in a GTP-dependent manner. The protein is Elongation factor 4 of Acidovorax ebreus (strain TPSY) (Diaphorobacter sp. (strain TPSY)).